A 551-amino-acid polypeptide reads, in one-letter code: uncharacterized protein (551 aa).

The N-terminal 36 residues, 1-36 (MMALVRDRRAHYVMSIVIRWVHCFSSSLRGTFGTRW), are a transit peptide targeting the mitochondrion. A coiled-coil region spans residues 203–315 (TNILLRKLKE…MDSRDRLREE (113 aa)). The tract at residues 354-389 (REASLSPWPKSPPSTTALRPHSATMSVSSAGAQKAK) is disordered. Positions 366 to 384 (PSTTALRPHSATMSVSSAG) are enriched in polar residues. Residues 405–439 (KHGLESQIEALKANLENEKKKVERFRKEADRLNKS) are a coiled coil. The segment at 519–551 (LQLSPKGKLSESPKEESLEEPSMRQSSPAETVD) is disordered. Positions 541 to 551 (MRQSSPAETVD) are enriched in polar residues.

In terms of assembly, interacts with NOD2.

It is found in the mitochondrion. This is an uncharacterized protein from Homo sapiens (Human).